The primary structure comprises 414 residues: MVNFDLGQVGEVFRRKDKGAIVSGDNPEEEEDVDASEFEEDEVKPVRTKNRRPKEDAFTQQRLAAINPVLTPRTVLPLYLLIAVVFVIVGGCILAQNSKVDEVTIYYQDCMTNATSSWSDIPSEHWQFVFHKYKTYNTAPQWRFVDDESDDFTKQRGTCQIRFTTPSDMKNNVYLNYVLEKFAANHRRYVLSFSEDQIRGEDASYETVHDATGINCKPLSKNADGKIYYPCGLIANSMFNDTFPLQLTNVGDTSNNYSLTNKGINWESDKKRYKKTKYNYTQIAPPPYWEKMYPDGYNETNIPDIQDWEEFQNWMRPGAFDKITKLIRINKNDTLPAGEYQLDIGLHWPVLEFNGKKGIYLTHGSHLGGRNPFLGIVYLIGGCICAAMALILLTFWLFGGRKIADASSLSWNMK.

Residues 1–50 (MVNFDLGQVGEVFRRKDKGAIVSGDNPEEEEDVDASEFEEDEVKPVRTKN) form a required for localization to the plasma membrane region. Residues 1–74 (MVNFDLGQVG…AINPVLTPRT (74 aa)) are Cytoplasmic-facing. The interval 20–52 (AIVSGDNPEEEEDVDASEFEEDEVKPVRTKNRR) is disordered. Positions 26 to 42 (NPEEEEDVDASEFEEDE) are enriched in acidic residues. The residue at position 36 (Ser36) is a Phosphoserine. Residues 75–95 (VLPLYLLIAVVFVIVGGCILA) traverse the membrane as a helical segment. The Extracellular segment spans residues 96–372 (QNSKVDEVTI…HGSHLGGRNP (277 aa)). 2 disulfides stabilise this stretch: Cys110-Cys159 and Cys216-Cys231. A glycan (N-linked (GlcNAc...) asparagine) is linked at Asn113. Residues Asn240, Asn256, Asn279, Asn298, and Asn332 are each glycosylated (N-linked (GlcNAc...) asparagine). A helical transmembrane segment spans residues 373–393 (FLGIVYLIGGCICAAMALILL). Topologically, residues 394–414 (TFWLFGGRKIADASSLSWNMK) are cytoplasmic. The interval 400–414 (GRKIADASSLSWNMK) is required for localization to the plasma membrane.

Belongs to the CDC50/LEM3 family. Component of a flippase complex consisting of DNF1 or DNF2 and LEM3. Interacts with DNF1; the interaction is direct and required for their mutual export from the endoplasmic reticulum. Interacts with DNF2; the interaction is direct and required for their mutual export from the endoplasmic reticulum.

The protein localises to the cell membrane. Its function is as follows. Accessory component of a P4-ATPase flippase complex which catalyzes the hydrolysis of ATP coupled to the transport of glucosylceramide, phosphatidylcholine, phosphatidylethanolamine, and small amounts of phosphatidylserine from the lumenal to the cytosolic leaflet of the cell membrane and ensures the maintenance of asymmetric distribution of phospholipids. Contributes to substrate binding and specificity of the P4-ATPase catalytic subunit. The polypeptide is Phospholipid-transporting ATPase accessory subunit LEM3 (Saccharomyces cerevisiae (strain ATCC 204508 / S288c) (Baker's yeast)).